The chain runs to 354 residues: Uroporphyrinogen decarboxylase (354 aa).

Substrate is bound by residues R27 to R31, F46, D77, Y154, T209, and H327.

Belongs to the uroporphyrinogen decarboxylase family. As to quaternary structure, homodimer.

It is found in the cytoplasm. It carries out the reaction uroporphyrinogen III + 4 H(+) = coproporphyrinogen III + 4 CO2. It functions in the pathway porphyrin-containing compound metabolism; protoporphyrin-IX biosynthesis; coproporphyrinogen-III from 5-aminolevulinate: step 4/4. Functionally, catalyzes the decarboxylation of four acetate groups of uroporphyrinogen-III to yield coproporphyrinogen-III. The chain is Uroporphyrinogen decarboxylase from Pseudomonas putida (strain ATCC 47054 / DSM 6125 / CFBP 8728 / NCIMB 11950 / KT2440).